We begin with the raw amino-acid sequence, 316 residues long: MVTMNRNKVVIVGTGQVGATAAFGIVTHGLCNELVLIDCSAAKALGEARDLDDGSEFQDRHVKVRAGDYADCKDADIVVITVGRKPPANSNRMAELGFTVGLVGEVVDNVMASGFDGVIVMVSNPVDVMAWYAWKRSGLPRTQVLGTGTALDTSRLKTIIGEETGLDPRNVGGFVMGEHGDSQFTAWSTVSLGGKPFARFLADNQDRFASVSTTEIEEKTRTRGNEIVAAKGGTNFGIASTVAGIVQTILWDERRIVPVSTLLDGEYGEHDVFLGVPTELRANGANEIVELDLSEDERAKLHHSAELVREHCEGLL.

NAD(+) is bound by residues V17, D38, K43, and Y69. Substrate is bound by residues R92 and 124-127; that span reads NPVD. Residues 122–124 and T147 each bind NAD(+); that span reads VSN. 152-155 is a binding site for substrate; the sequence is DTSR. H179 (proton acceptor) is an active-site residue. T234 is a binding site for substrate.

It belongs to the LDH/MDH superfamily. LDH family. As to quaternary structure, homotetramer.

It localises to the cytoplasm. The catalysed reaction is (S)-lactate + NAD(+) = pyruvate + NADH + H(+). Its pathway is fermentation; pyruvate fermentation to lactate; (S)-lactate from pyruvate: step 1/1. In terms of biological role, catalyzes the conversion of lactate to pyruvate. This chain is L-lactate dehydrogenase 1, found in Bifidobacterium longum subsp. longum (strain ATCC 15707 / DSM 20219 / JCM 1217 / NCTC 11818 / E194b).